The sequence spans 255 residues: Triosephosphate isomerase (255 aa).

9 to 11 (NWK) is a substrate binding site. His95 serves as the catalytic Electrophile. Residue Glu167 is the Proton acceptor of the active site. Substrate-binding positions include Gly173, Ser212, and 233 to 234 (GG).

It belongs to the triosephosphate isomerase family. As to quaternary structure, homodimer.

It localises to the cytoplasm. It catalyses the reaction D-glyceraldehyde 3-phosphate = dihydroxyacetone phosphate. It participates in carbohydrate biosynthesis; gluconeogenesis. It functions in the pathway carbohydrate degradation; glycolysis; D-glyceraldehyde 3-phosphate from glycerone phosphate: step 1/1. Functionally, involved in the gluconeogenesis. Catalyzes stereospecifically the conversion of dihydroxyacetone phosphate (DHAP) to D-glyceraldehyde-3-phosphate (G3P). The chain is Triosephosphate isomerase from Pectobacterium atrosepticum (strain SCRI 1043 / ATCC BAA-672) (Erwinia carotovora subsp. atroseptica).